We begin with the raw amino-acid sequence, 448 residues long: Glutamyl-tRNA reductase (448 aa).

Substrate contacts are provided by residues 49–52 (TCNR), Ser-109, 114–116 (ETQ), and Gln-120. Cys-50 acts as the Nucleophile in catalysis. Residue 189-194 (GAGETG) participates in NADP(+) binding. A disordered region spans residues 427-448 (PVDEVEETDATSAKAPLRALMR).

This sequence belongs to the glutamyl-tRNA reductase family. As to quaternary structure, homodimer.

It carries out the reaction (S)-4-amino-5-oxopentanoate + tRNA(Glu) + NADP(+) = L-glutamyl-tRNA(Glu) + NADPH + H(+). It participates in porphyrin-containing compound metabolism; protoporphyrin-IX biosynthesis; 5-aminolevulinate from L-glutamyl-tRNA(Glu): step 1/2. In terms of biological role, catalyzes the NADPH-dependent reduction of glutamyl-tRNA(Glu) to glutamate 1-semialdehyde (GSA). The sequence is that of Glutamyl-tRNA reductase from Exiguobacterium sp. (strain ATCC BAA-1283 / AT1b).